The primary structure comprises 139 residues: Maximins 4/H3 type 5 (139 aa).

The N-terminal stretch at 1-18 (MNFKYIFAVSFLIASAYA) is a signal peptide. A propeptide spanning residues 19 to 43 (RSVQNDEQSLSQRDVLEEESLREIR) is cleaved from the precursor. N70 carries the post-translational modification Asparagine amide. Positions 74–118 (TAEEHEVMKRLEAVMRDLDSLDHPEEASERETRGFNQDEIAKEKR) are excised as a propeptide. I138 bears the Isoleucine amide mark.

This sequence belongs to the bombinin family. In terms of tissue distribution, expressed by the skin glands.

The protein localises to the secreted. Functionally, maximin-4 shows antibacterial activity against both Gram-positive and Gram-negative bacteria. It also shows antimicrobial activity against the fungus C.albicans, but not against A.flavus nor P.uticale. It has little hemolytic activity. It does not possess a significant cytotoxicity against tumor cell lines. It does not possess a significant anti-HIV activity. Its function is as follows. Maximin-H3 shows antibacterial activity against both Gram-positive and Gram-negative bacteria. It also shows antimicrobial activity against the fungus C.albicans. Shows strong hemolytic activity. This Bombina maxima (Giant fire-bellied toad) protein is Maximins 4/H3 type 5.